Here is a 422-residue protein sequence, read N- to C-terminus: ORC1-type DNA replication protein 13 (422 aa).

ATP-binding positions include 80–84 (TGKTL), tyrosine 231, and arginine 243.

Belongs to the CDC6/cdc18 family.

Functionally, involved in regulation of DNA replication. This chain is ORC1-type DNA replication protein 13 (cdc6m), found in Haloarcula marismortui (strain ATCC 43049 / DSM 3752 / JCM 8966 / VKM B-1809) (Halobacterium marismortui).